The sequence spans 267 residues: tRNA-cytidine(32) 2-sulfurtransferase 1 (267 aa).

The PP-loop motif signature appears at 42-47; sequence SGGKDS. [4Fe-4S] cluster-binding residues include Cys-117, Cys-120, and Cys-208.

Belongs to the TtcA family. Homodimer. It depends on Mg(2+) as a cofactor. The cofactor is [4Fe-4S] cluster.

It is found in the cytoplasm. It carries out the reaction cytidine(32) in tRNA + S-sulfanyl-L-cysteinyl-[cysteine desulfurase] + AH2 + ATP = 2-thiocytidine(32) in tRNA + L-cysteinyl-[cysteine desulfurase] + A + AMP + diphosphate + H(+). It participates in tRNA modification. Its function is as follows. Catalyzes the ATP-dependent 2-thiolation of cytidine in position 32 of tRNA, to form 2-thiocytidine (s(2)C32). The sulfur atoms are provided by the cysteine/cysteine desulfurase (IscS) system. The polypeptide is tRNA-cytidine(32) 2-sulfurtransferase 1 (Francisella tularensis subsp. novicida (strain U112)).